The following is a 340-amino-acid chain: Heat-inducible transcription repressor HrcA (340 aa).

It belongs to the HrcA family.

Its function is as follows. Negative regulator of class I heat shock genes (grpE-dnaK-dnaJ and groELS operons). Prevents heat-shock induction of these operons. This is Heat-inducible transcription repressor HrcA from Burkholderia ambifaria (strain MC40-6).